A 186-amino-acid chain; its full sequence is Alkyl hydroperoxide reductase AhpD (186 aa).

Cysteine 132 (proton donor) is an active-site residue. Cysteine 132 and cysteine 135 form a disulfide bridge. The active-site Cysteine sulfenic acid (-SOH) intermediate is cysteine 135.

Belongs to the AhpD family.

The catalysed reaction is N(6)-[(R)-dihydrolipoyl]-L-lysyl-[lipoyl-carrier protein] + a hydroperoxide = N(6)-[(R)-lipoyl]-L-lysyl-[lipoyl-carrier protein] + an alcohol + H2O. In terms of biological role, antioxidant protein with alkyl hydroperoxidase activity. Required for the reduction of the AhpC active site cysteine residues and for the regeneration of the AhpC enzyme activity. This is Alkyl hydroperoxide reductase AhpD from Anaeromyxobacter dehalogenans (strain 2CP-C).